The primary structure comprises 145 residues: Maximins 5/H4 type 1 (145 aa).

The first 18 residues, 1-18 (MNFKYIVAVSFLIASAYA), serve as a signal peptide directing secretion. Propeptides lie at residues 19 to 43 (RSVQ…REIR) and 74 to 124 (TAEE…KEKR). The residue at position 144 (leucine 144) is a Leucine amide.

This sequence belongs to the bombinin family. Expressed by the skin glands.

The protein localises to the secreted. In terms of biological role, maximin-5 shows antibacterial activity against both Gram-positive and Gram-negative bacteria. The only exception is the resistance of E.coli. Also shows antimicrobial activity against fungi C.albicans, A.flavus and P.uticale. It has little hemolytic activity. It does not possess a significant cytotoxicity against tumor cell lines. It does not possess a significant anti-HIV activity. Maximin-H4 shows antibacterial activity against both Gram-positive and Gram-negative bacteria. It also shows antimicrobial activity against the fungus C.albicans. Shows strong hemolytic activity. The sequence is that of Maximins 5/H4 type 1 from Bombina maxima (Giant fire-bellied toad).